The primary structure comprises 679 residues: Leucine-rich repeat, immunoglobulin-like domain and transmembrane domain-containing protein 3 (679 aa).

The first 19 residues, 1–19, serve as a signal peptide directing secretion; sequence MHLFACLCIVLSFLEGVGC. At 20 to 582 the chain is on the lumenal side; it reads LCPSQCTCDY…RVEGDDSQWS (563 aa). 5 LRR repeats span residues 56 to 79, 80 to 103, 104 to 128, 129 to 151, and 152 to 175; these read PVDT…AFYY, LVEL…SFYN, LKQL…LLDM, PLLR…ALRY, and LKNL…FLES. The LRRCT domain maps to 201–253; it reads NPWFCDCHISKMIELSKVVDPAIVLLDPLMTCSEPERLTGILFQRAELEHCLK. Residues 254-344 enclose the Ig-like domain; the sequence is PSVMTSATKI…GMSEAVVTVT (91 aa). Residues C275 and C328 are joined by a disulfide bond. An N-linked (GlcNAc...) asparagine glycan is attached at N296. The disordered stretch occupies residues 351-375; the sequence is TPIPPDTSERTGDHPEWDVQPGSGR. Basic and acidic residues predominate over residues 357–367; that stretch reads TSERTGDHPEW. The Fibronectin type-III domain occupies 486–574; sequence AIENLRVVSE…QCITFSTERV (89 aa). Residues 583–603 traverse the membrane as a helical segment; sequence LLLVVTSTACVVILPLICFLL. Topologically, residues 604–679 are cytoplasmic; it reads YKVCKLQCKS…SEGSRPEYYC (76 aa).

Glycosylated. Detected in the outer plexiform layer (OPL) of the retina where it localizes to ON-bipolar cells (at protein level).

Its subcellular location is the cell projection. It localises to the dendrite. The protein localises to the perikaryon. The protein resides in the endoplasmic reticulum membrane. In terms of biological role, plays a role in the synapse formation and synaptic transmission between cone photoreceptor cells and retinal bipolar cells. Required for normal transmission of a light-evoked stimulus from the cone photoreceptor cells to the ON-bipolar cells and ON-ganglion cells in the inner retina. Required in retinal ON-bipolar cells for normal localization of the cation channel TRPM1 at dendrite tips. Seems to play a specific role in synaptic contacts made by ON-bipolar cells with cone photoreceptor pedicles. May also have a role in cone synapse formation. Might facilitate FGFR1 exit from the endoplasmic reticulum to the Golgi. Could be a regulator of the FGFRs. The chain is Leucine-rich repeat, immunoglobulin-like domain and transmembrane domain-containing protein 3 (LRIT3) from Homo sapiens (Human).